Consider the following 188-residue polypeptide: Elongation factor P (188 aa).

It belongs to the elongation factor P family.

The protein localises to the cytoplasm. It functions in the pathway protein biosynthesis; polypeptide chain elongation. In terms of biological role, involved in peptide bond synthesis. Stimulates efficient translation and peptide-bond synthesis on native or reconstituted 70S ribosomes in vitro. Probably functions indirectly by altering the affinity of the ribosome for aminoacyl-tRNA, thus increasing their reactivity as acceptors for peptidyl transferase. This Chlorobaculum parvum (strain DSM 263 / NCIMB 8327) (Chlorobium vibrioforme subsp. thiosulfatophilum) protein is Elongation factor P.